Consider the following 92-residue polypeptide: Small ribosomal subunit protein uS19 (92 aa).

The segment at 1 to 27 (MARSIKKGPFADDHLKKKVEAQSGSEK) is disordered. The span at 9 to 27 (PFADDHLKKKVEAQSGSEK) shows a compositional bias: basic and acidic residues.

Belongs to the universal ribosomal protein uS19 family.

In terms of biological role, protein S19 forms a complex with S13 that binds strongly to the 16S ribosomal RNA. The chain is Small ribosomal subunit protein uS19 from Staphylococcus saprophyticus subsp. saprophyticus (strain ATCC 15305 / DSM 20229 / NCIMB 8711 / NCTC 7292 / S-41).